The sequence spans 218 residues: N-(5'-phosphoribosyl)anthranilate isomerase (218 aa).

The protein belongs to the TrpF family.

It catalyses the reaction N-(5-phospho-beta-D-ribosyl)anthranilate = 1-(2-carboxyphenylamino)-1-deoxy-D-ribulose 5-phosphate. It participates in amino-acid biosynthesis; L-tryptophan biosynthesis; L-tryptophan from chorismate: step 3/5. The polypeptide is N-(5'-phosphoribosyl)anthranilate isomerase (Halobacterium salinarum (strain ATCC 29341 / DSM 671 / R1)).